The sequence spans 1755 residues: Transposon Ty1-DR5 Gag-Pol polyprotein (1755 aa).

Composition is skewed to polar residues over residues 1–10, 48–60, and 127–152; these read MESQQLSNYP, TKAN…TPAS, and QSQF…GNTF. 3 disordered regions span residues 1–93, 126–173, and 352–421; these read MESQ…MMTQ, PQSQ…RPPP, and GSRN…SKST. Residues 153–165 are compositionally biased toward low complexity; that stretch reads TDSSSADSDMTST. The interval 299–401 is RNA-binding; that stretch reads NNGIHINNKV…NSKSKTARAH (103 aa). The segment covering 402 to 418 has biased composition (low complexity); sequence NVSTSNNSPSTDNDSIS. Catalysis depends on aspartate 461, which acts as the For protease activity; shared with dimeric partner. The interval 583-640 is integrase-type zinc finger-like; that stretch reads NVHTSESTRKYPYPFIHRMLAHANAQTIRYSLKNNTITYFNESDVDWSSAIDYQCPDC. Residues 660-835 form the Integrase catalytic domain; the sequence is NSYEPFQYLH…AGLDISTLLP (176 aa). Residues aspartate 671 and aspartate 736 each coordinate Mg(2+). Disordered regions lie at residues 956 to 1087, 1092 to 1111, and 1130 to 1187; these read SKAV…ETEK, RSPS…NIVP, and DLPL…DNET. Residues 960–969 are compositionally biased toward low complexity; sequence SPTDSTPPST. Residues 1005–1015 are compositionally biased toward polar residues; that stretch reads STPQISNIEST. Basic and acidic residues predominate over residues 1038-1053; it reads ESSHASKSKDFRHSDS. 2 stretches are compositionally biased toward polar residues: residues 1054–1082 and 1101–1111; these read YSEN…QISD and PENNSSHNIVP. The Bipartite nuclear localization signal signature appears at 1178–1212; that stretch reads KKRSLEDNETEIKVSRDTWNTKNMRSLEPPRSKKR. One can recognise a Reverse transcriptase Ty1/copia-type domain in the interval 1338-1476; the sequence is NNYYITQLDI…DILGLEIKYQ (139 aa). Residues aspartate 1346, aspartate 1427, aspartate 1428, aspartate 1610, glutamate 1652, and aspartate 1685 each coordinate Mg(2+). The 143-residue stretch at 1610 to 1752 folds into the RNase H Ty1/copia-type domain; that stretch reads DASYGNQPYY…IKTFKLLTNK (143 aa).

In terms of assembly, the capsid protein forms a homotrimer, from which the VLPs are assembled. The protease is a homodimer, whose active site consists of two apposed aspartic acid residues. Post-translationally, initially, virus-like particles (VLPs) are composed of the structural unprocessed proteins Gag and Gag-Pol, and also contain the host initiator methionine tRNA (tRNA(i)-Met) which serves as a primer for minus-strand DNA synthesis, and a dimer of genomic Ty RNA. Processing of the polyproteins occurs within the particle and proceeds by an ordered pathway, called maturation. First, the protease (PR) is released by autocatalytic cleavage of the Gag-Pol polyprotein yielding capsid protein p45 and a Pol-p154 precursor protein. This cleavage is a prerequisite for subsequent processing of Pol-p154 at the remaining sites to release the mature structural and catalytic proteins. Maturation takes place prior to the RT reaction and is required to produce transposition-competent VLPs.

It localises to the cytoplasm. The protein resides in the nucleus. The catalysed reaction is DNA(n) + a 2'-deoxyribonucleoside 5'-triphosphate = DNA(n+1) + diphosphate. The enzyme catalyses Endonucleolytic cleavage to 5'-phosphomonoester.. Functionally, capsid protein (CA) is the structural component of the virus-like particle (VLP), forming the shell that encapsulates the retrotransposons dimeric RNA genome. The particles are assembled from trimer-clustered units and there are holes in the capsid shells that allow for the diffusion of macromolecules. CA also has nucleocapsid-like chaperone activity, promoting primer tRNA(i)-Met annealing to the multipartite primer-binding site (PBS), dimerization of Ty1 RNA and initiation of reverse transcription. Its function is as follows. The aspartyl protease (PR) mediates the proteolytic cleavages of the Gag and Gag-Pol polyproteins after assembly of the VLP. In terms of biological role, reverse transcriptase/ribonuclease H (RT) is a multifunctional enzyme that catalyzes the conversion of the retro-elements RNA genome into dsDNA within the VLP. The enzyme displays a DNA polymerase activity that can copy either DNA or RNA templates, and a ribonuclease H (RNase H) activity that cleaves the RNA strand of RNA-DNA heteroduplexes during plus-strand synthesis and hydrolyzes RNA primers. The conversion leads to a linear dsDNA copy of the retrotransposon that includes long terminal repeats (LTRs) at both ends. Integrase (IN) targets the VLP to the nucleus, where a subparticle preintegration complex (PIC) containing at least integrase and the newly synthesized dsDNA copy of the retrotransposon must transit the nuclear membrane. Once in the nucleus, integrase performs the integration of the dsDNA into the host genome. The protein is Transposon Ty1-DR5 Gag-Pol polyprotein (TY1B-DR5) of Saccharomyces cerevisiae (strain ATCC 204508 / S288c) (Baker's yeast).